The chain runs to 121 residues: Basic phospholipase A2 CoaTx-II (121 aa).

Intrachain disulfides connect C26–C115, C28–C44, C43–C95, C49–C121, C50–C88, C57–C81, and C75–C86. An important for membrane-damaging activities in eukaryotes and bacteria; heparin-binding region spans residues 105 to 117 (KKYRIYPKFLCKK).

Belongs to the phospholipase A2 family. Group II subfamily. K49 sub-subfamily. In terms of assembly, homodimer; non-covalently-linked. In terms of tissue distribution, expressed by the venom gland.

The protein resides in the secreted. Its function is as follows. Snake venom phospholipase A2 (PLA2) that lacks enzymatic inactivity. It shows antibacterial activity against both Gram-negative and Gram-positive bacteria, including methicillin-resistant strains. In vivo, it causes local muscular damage, but no systemic damage (intravenous administration does not elevate plasma creatine kinase). Also causes an inflammatory activity that is demonstrated by mice paw edema induction and pro-inflammatory cytokine IL-6 elevation. A model of myotoxic mechanism has been proposed: an apo Lys49-PLA2 is activated by the entrance of a hydrophobic molecule (e.g. fatty acid) at the hydrophobic channel of the protein leading to a reorientation of a monomer. This reorientation causes a transition between 'inactive' to 'active' states, causing alignment of C-terminal and membrane-docking sites (MDoS) side-by-side and putting the membrane-disruption sites (MDiS) in the same plane, exposed to solvent and in a symmetric position for both monomers. The MDoS region stabilizes the toxin on membrane by the interaction of charged residues with phospholipid head groups. Subsequently, the MDiS region destabilizes the membrane with penetration of hydrophobic residues. This insertion causes a disorganization of the membrane, allowing an uncontrolled influx of ions (i.e. calcium and sodium), and eventually triggering irreversible intracellular alterations and cell death. The protein is Basic phospholipase A2 CoaTx-II of Crotalus lutosus abyssus (Grand Canyon rattlesnake).